The chain runs to 1076 residues: DNA-directed RNA polymerase subunit beta (1076 aa).

It belongs to the RNA polymerase beta chain family. In terms of assembly, in plastids the minimal PEP RNA polymerase catalytic core is composed of four subunits: alpha, beta, beta', and beta''. When a (nuclear-encoded) sigma factor is associated with the core the holoenzyme is formed, which can initiate transcription.

The protein resides in the plastid. It is found in the chloroplast. It catalyses the reaction RNA(n) + a ribonucleoside 5'-triphosphate = RNA(n+1) + diphosphate. Its function is as follows. DNA-dependent RNA polymerase catalyzes the transcription of DNA into RNA using the four ribonucleoside triphosphates as substrates. In Lolium perenne (Perennial ryegrass), this protein is DNA-directed RNA polymerase subunit beta.